We begin with the raw amino-acid sequence, 430 residues long: Adenylosuccinate synthetase (430 aa).

Residues Gly12 to Lys18 and Gly40 to Thr42 each bind GTP. Asp13 (proton acceptor) is an active-site residue. The Mg(2+) site is built by Asp13 and Gly40. Residues Asp13–Lys16, Asn38–His41, Thr130, Arg144, Gln224, Thr239, and Arg303 contribute to the IMP site. Residue His41 is the Proton donor of the active site. Val299–Arg305 lines the substrate pocket. GTP-binding positions include Arg305, Lys331–Asp333, and Ser413–Ser415.

The protein belongs to the adenylosuccinate synthetase family. Homodimer. Mg(2+) serves as cofactor.

It localises to the cytoplasm. The catalysed reaction is IMP + L-aspartate + GTP = N(6)-(1,2-dicarboxyethyl)-AMP + GDP + phosphate + 2 H(+). Its pathway is purine metabolism; AMP biosynthesis via de novo pathway; AMP from IMP: step 1/2. Plays an important role in the de novo pathway of purine nucleotide biosynthesis. Catalyzes the first committed step in the biosynthesis of AMP from IMP. This is Adenylosuccinate synthetase from Rhodopseudomonas palustris (strain ATCC BAA-98 / CGA009).